The sequence spans 542 residues: Serine/threonine-protein phosphatase 2A regulatory subunit pptr-1 (542 aa).

Disordered regions lie at residues 1–28 (MHGSGHSLTGAPHQIPPPRTQGAATGGQ) and 500–542 (DYLK…PAKK). A compositionally biased stretch (polar residues) spans 528–542 (KKSSTGSETTTPAKK).

This sequence belongs to the phosphatase 2A regulatory subunit B56 family. Part of a complex consisting of a common heterodimeric core enzyme, composed of catalytic subunit let-92 and constant regulatory subunit paa-1, that associates with a variety of regulatory subunits which confer distinct properties to the holoenzyme. Interacts with akt-1 but not akt-2. Interacts with sgk-1. Interacts with P granule components meg-1, meg-3 and meg-4. Expressed in pharynx, vulva and spermatheca.

It localises to the cytoplasm. Functionally, probable regulatory subunit of serine/threonine-protein phosphatase let-92 which negatively regulates the insulin receptor signaling cascade composed of daf-2, age-1, akt-1, akt-2 and sgk-1 by promoting the dephosphorylation of akt-1 on 'Thr-350'. Negatively regulates several functions controlled by the insulin pathway including dauer formation, lifespan, fat storage and stress resistance. Plays a role in the asymmetric segregation of the P granule components during embryonic cell divisions but does not play an essential role in specifying germ cell fate. Within a PP2A phosphatase complex, acts redundantly with pptr-2, to dephosphorylate P granule components including meg-1 and meg-3 to promote the assembly and accumulation of zygotic P granules in the posterior cytoplasm during zygote polarization, and thus maintain P granule distribution and segregation in early stage embryos following meiosis. In adults, required to promote germ cell proliferation and differentiation when exposed to thermic stress. This chain is Serine/threonine-protein phosphatase 2A regulatory subunit pptr-1, found in Caenorhabditis elegans.